The following is a 29-amino-acid chain: Dermaseptin-1 (29 aa).

Valine amide is present on valine 29.

Expressed by the skin glands.

It localises to the secreted. In terms of biological role, antimicrobial peptide, active against the Gram-positive bacterium S.aureus, the Gram-negative bacteria E.coli and P.aeruginosa, and the yeasts C.albicans and P.brasiliensis. Has hemolytic activity (40% hemolysis at 128 ug/ml). In Phyllomedusa tarsius (Brownbelly leaf frog), this protein is Dermaseptin-1.